A 1160-amino-acid chain; its full sequence is ATP-dependent RNA helicase dhx8 (1160 aa).

2 disordered regions span residues 75 to 140 (TTTT…SIPN) and 153 to 192 (PIDD…QNKR). Composition is skewed to low complexity over residues 76 to 110 (TTTT…NNNN) and 122 to 132 (NSNSNNQKKNQ). Positions 155–192 (DDEKTKEELKRKQQDMDREFEREQREKRDRDREQQNKR) are enriched in basic and acidic residues. The S1 motif domain maps to 202-274 (YKIYDGKVSS…ASSKISLSMK (73 aa)). A compositionally biased stretch (low complexity) spans 294 to 320 (ISTNSTNNRSNPFKPNNNNNNSSNNNN). Disordered regions lie at residues 294–334 (ISTN…KNRK) and 409–438 (KPNG…QRNE). Over residues 412–424 (GSLQRAASTQTAL) the composition is skewed to polar residues. Residues 425-438 (SKERKEEKNQQRNE) show a composition bias toward basic and acidic residues. A Helicase ATP-binding domain is found at 518 to 681 (LQAVSEHQLL…FMNAQLFIIP (164 aa)). 531 to 538 (GETGSGKT) contributes to the ATP binding site. Positions 628-631 (DEAH) match the DEAH box motif. The 181-residue stretch at 699-879 (YLDASLITVM…NTVLTMKAMG (181 aa)) folds into the Helicase C-terminal domain.

The protein belongs to the DEAD box helicase family. DEAH subfamily. DDX8/PRP22 sub-subfamily. Identified in the spliceosome complex.

The protein resides in the nucleus. It catalyses the reaction ATP + H2O = ADP + phosphate + H(+). Functionally, facilitates nuclear export of spliced mRNA by releasing the RNA from the spliceosome. The sequence is that of ATP-dependent RNA helicase dhx8 (dhx8) from Dictyostelium discoideum (Social amoeba).